Here is a 351-residue protein sequence, read N- to C-terminus: Palmitoyltransferase spe-10 (351 aa).

Helical transmembrane passes span 21-43 (TGWI…LWWS), 60-80 (IQAT…MWSL), 198-218 (YFLL…LTSL), and 241-261 (LFSF…LIIF). Residues 154–204 (KYCYECGHIKPDRARHCSSCGKCCIKYDHHCPWINMCVTHVNYKYFLLYII) form the DHHC domain.

It belongs to the DHHC palmitoyltransferase family. Expressed during spermatogenesis in budding and budded spermatids.

It is found in the membrane. It catalyses the reaction L-cysteinyl-[protein] + hexadecanoyl-CoA = S-hexadecanoyl-L-cysteinyl-[protein] + CoA. Functionally, involved in spermatogenesis, specifically in the morphogenesis of fibrous body-membranous organelles (FB-MO), which are Golgi-derived organelles used for transporting sperm-specific components, in spermatocytes and in their localization into budding spermatids. Required for the proper formation of spermatids and spermatozoa. The sequence is that of Palmitoyltransferase spe-10 from Caenorhabditis elegans.